Here is a 474-residue protein sequence, read N- to C-terminus: Probable periplasmic serine endoprotease DegP-like (474 aa).

Residues 1 to 25 (MRNLKSVTPLLMAALLWGQSLLAQA) form the signal peptide. Residues His113, Asp143, and Ser216 each act as charge relay system in the active site. Substrate-binding positions include 214–216 (GNS) and 271–275 (LGVVI). PDZ domains are found at residues 260 to 351 (LKAD…VRDG) and 357 to 463 (KVTI…LRQG).

This sequence belongs to the peptidase S1C family.

It localises to the periplasm. The catalysed reaction is Acts on substrates that are at least partially unfolded. The cleavage site P1 residue is normally between a pair of hydrophobic residues, such as Val-|-Val.. Might be efficient in the degradation of transiently denatured and unfolded proteins which accumulate in the periplasm following stress conditions. The polypeptide is Probable periplasmic serine endoprotease DegP-like (Ectopseudomonas mendocina (strain ymp) (Pseudomonas mendocina)).